Reading from the N-terminus, the 178-residue chain is Translation initiation factor IF-3 (178 aa).

Belongs to the IF-3 family. As to quaternary structure, monomer.

Its subcellular location is the cytoplasm. In terms of biological role, IF-3 binds to the 30S ribosomal subunit and shifts the equilibrium between 70S ribosomes and their 50S and 30S subunits in favor of the free subunits, thus enhancing the availability of 30S subunits on which protein synthesis initiation begins. This chain is Translation initiation factor IF-3, found in Ureaplasma parvum serovar 3 (strain ATCC 700970).